The primary structure comprises 425 residues: MSERNVIQELEARGLIAQQTDSGALQKLLESESVTLYCGFDPTADSLHLGHLVPLLMLRRFQEAGHRPIALVGGATGMIGDPSFKAAERKLNTPDVIAGWVDKIRRQLSPFLSFEGDNAAVMANNYDWFGQMNVLEFLRDIGKHFSVNAMIKKESVQQRISREDQGISFTEFSYSLLQGNDFAELNCRFGCKLQIGGSDQWGNITAGIDLTRRLNQQQVFGLTVPLITNSDGTKFGKSEGNAVWLDPQKCSPYKFYQFWLGVADADVYRFLRYFTFLSIEQIDAIEAADKTSGTRPQAQRILAEEATRLVHGDEALKAAQRITESLFSNDLSALTAEDLAQLALDGLPVLDMAGQGDGLIDALAASGLAKSKSEARTFIQSGAVSINGIKAEGLDYCLTGNDRLFGRYTLLKRGKKLYALLVWPA.

Tyr-37 is an L-tyrosine binding site. The 'HIGH' region motif lies at 42–51; sequence PTADSLHLGH. Residues Tyr-174 and Gln-178 each coordinate L-tyrosine. The 'KMSKS' region signature appears at 234-238; sequence KFGKS. Residue Lys-237 participates in ATP binding. Residues 357 to 422 enclose the S4 RNA-binding domain; it reads DGLIDALAAS…RGKKLYALLV (66 aa).

The protein belongs to the class-I aminoacyl-tRNA synthetase family. TyrS type 1 subfamily. In terms of assembly, homodimer.

The protein localises to the cytoplasm. The catalysed reaction is tRNA(Tyr) + L-tyrosine + ATP = L-tyrosyl-tRNA(Tyr) + AMP + diphosphate + H(+). Functionally, catalyzes the attachment of tyrosine to tRNA(Tyr) in a two-step reaction: tyrosine is first activated by ATP to form Tyr-AMP and then transferred to the acceptor end of tRNA(Tyr). The sequence is that of Tyrosine--tRNA ligase from Laribacter hongkongensis (strain HLHK9).